Consider the following 506-residue polypeptide: Xaa-Pro aminopeptidase 3 (506 aa).

The transit peptide at M1–Y31 directs the protein to the mitochondrion. An interaction with TNFRSF1B region spans residues H54–L79. Substrate contacts are provided by Y300, D331, D342, H423, H430, E450, and E474. Residues D331, D342, and H423 each contribute to the Mn(2+) site. Mn(2+) is bound by residues E450 and E474.

This sequence belongs to the peptidase M24B family. Homodimer. Interacts with TNFRSF1B/TNFR2 (activated) and TRAF2. It depends on Mn(2+) as a cofactor. In terms of tissue distribution, expressed in brain, kidney, heart, liver, skeletal muscle and testis.

It localises to the mitochondrion. Its subcellular location is the cytoplasm. The catalysed reaction is Release of any N-terminal amino acid, including proline, that is linked to proline, even from a dipeptide or tripeptide.. In terms of biological role, catalyzes the removal of a penultimate prolyl residue from the N-termini of peptides, such as Leu-Pro-Ala. Also shows low activity towards peptides with Ala or Ser at the P1 position. Promotes TNFRSF1B-mediated phosphorylation of MAPK8/JNK1 and MAPK9/JNK2, suggesting a function as an adapter protein for TNFRSF1B; the effect is independent of XPNPEP3 peptidase activity. May inhibit apoptotic cell death induced via TNF-TNFRSF1B signaling. The chain is Xaa-Pro aminopeptidase 3 (Xpnpep3) from Mus musculus (Mouse).